Consider the following 156-residue polypeptide: Small ribosomal subunit protein uS7 (156 aa).

This sequence belongs to the universal ribosomal protein uS7 family. Part of the 30S ribosomal subunit. Contacts proteins S9 and S11.

Functionally, one of the primary rRNA binding proteins, it binds directly to 16S rRNA where it nucleates assembly of the head domain of the 30S subunit. Is located at the subunit interface close to the decoding center, probably blocks exit of the E-site tRNA. This is Small ribosomal subunit protein uS7 from Mycobacterium leprae (strain Br4923).